A 166-amino-acid chain; its full sequence is Testis-expressed protein 51 (166 aa).

An N-terminal signal peptide occupies residues 1-15; that stretch reads MLPLLIICLLPAIEG. Residues 138–154 traverse the membrane as a helical segment; the sequence is SLWAVSLSSALLLAIAG.

It is found in the membrane. This is Testis-expressed protein 51 from Homo sapiens (Human).